Consider the following 122-residue polypeptide: Large ribosomal subunit protein uL14 (122 aa).

Belongs to the universal ribosomal protein uL14 family. Part of the 50S ribosomal subunit. Forms a cluster with proteins L3 and L19. In the 70S ribosome, L14 and L19 interact and together make contacts with the 16S rRNA in bridges B5 and B8.

Binds to 23S rRNA. Forms part of two intersubunit bridges in the 70S ribosome. This Borreliella burgdorferi (strain ATCC 35210 / DSM 4680 / CIP 102532 / B31) (Borrelia burgdorferi) protein is Large ribosomal subunit protein uL14.